Reading from the N-terminus, the 337-residue chain is Membrane-spanning 4-domains subfamily A member 18 (337 aa).

The segment at 101–121 (LGTTDLQTQPGGPQNPPTCAP) is disordered. Transmembrane regions (helical) follow at residues 155 to 175 (LGAI…NPSL), 183 to 203 (AISG…SLSV), 220 to 240 (MNVV…VDLI), and 252 to 272 (GGLL…SHFG).

Belongs to the MS4A family.

The protein resides in the membrane. The chain is Membrane-spanning 4-domains subfamily A member 18 (MS4A18) from Bos taurus (Bovine).